A 215-amino-acid polypeptide reads, in one-letter code: L-fuculose phosphate aldolase (215 aa).

Substrate contacts are provided by residues 28-29 (GN), 43-44 (TG), and 71-72 (SS). Glu-73 acts as the Proton donor/acceptor in catalysis. Residues Glu-73, His-92, His-94, and His-155 each coordinate Zn(2+).

It belongs to the aldolase class II family. AraD/FucA subfamily. In terms of assembly, homotetramer. Requires Zn(2+) as cofactor.

It carries out the reaction L-fuculose 1-phosphate = (S)-lactaldehyde + dihydroxyacetone phosphate. It participates in carbohydrate degradation; L-fucose degradation; L-lactaldehyde and glycerone phosphate from L-fucose: step 3/3. With respect to regulation, inhibited by phosphoglycolohydroxamate (PGH). In terms of biological role, involved in the degradation of L-fucose and D-arabinose. Catalyzes the reversible cleavage of L-fuculose 1-phosphate (Fuc1P) to yield dihydroxyacetone phosphate (DHAP) and L-lactaldehyde. Also able to catalyze the reversible cleavage of D-ribulose 1-phosphate, but FucA has a higher affinity for L-fuculose 1-phosphate and L-lactaldehyde than for D-ribulose 1-phosphate and glycolaldehyde, respectively. FucA possesses a high specificity for the dihydroxyacetone phosphate (DHAP), but accepts a great variety of different aldehydes and has a strong preference for L-configurated alpha-hydroxy aldehydes. FucA generates a vicinal diol unit having the absolute (3R,4R)-cis configuration (D-erythro). The chain is L-fuculose phosphate aldolase from Escherichia coli (strain K12).